A 198-amino-acid chain; its full sequence is SCO2-like protein RF_0043 (198 aa).

The protein belongs to the SCO1/2 family.

The polypeptide is SCO2-like protein RF_0043 (Rickettsia felis (strain ATCC VR-1525 / URRWXCal2) (Rickettsia azadi)).